The following is a 203-amino-acid chain: 8-oxoguanine DNA glycosylase/AP lyase (203 aa).

Residues Lys128 and Asp146 contribute to the active site.

It belongs to the type-2 OGG1 family.

The catalysed reaction is 2'-deoxyribonucleotide-(2'-deoxyribose 5'-phosphate)-2'-deoxyribonucleotide-DNA = a 3'-end 2'-deoxyribonucleotide-(2,3-dehydro-2,3-deoxyribose 5'-phosphate)-DNA + a 5'-end 5'-phospho-2'-deoxyribonucleoside-DNA + H(+). Catalyzes the excision of an oxidatively damaged form of guanine (7,8-dihydro-8-oxoguanine = 8-oxoG) from DNA. Also cleaves the DNA backbone at apurinic/apyrimidinic sites (AP sites). This Sulfolobus acidocaldarius (strain ATCC 33909 / DSM 639 / JCM 8929 / NBRC 15157 / NCIMB 11770) protein is 8-oxoguanine DNA glycosylase/AP lyase.